The sequence spans 495 residues: Aspartyl/glutamyl-tRNA(Asn/Gln) amidotransferase subunit B (495 aa).

The protein belongs to the GatB/GatE family. GatB subfamily. Heterotrimer of A, B and C subunits.

It carries out the reaction L-glutamyl-tRNA(Gln) + L-glutamine + ATP + H2O = L-glutaminyl-tRNA(Gln) + L-glutamate + ADP + phosphate + H(+). The enzyme catalyses L-aspartyl-tRNA(Asn) + L-glutamine + ATP + H2O = L-asparaginyl-tRNA(Asn) + L-glutamate + ADP + phosphate + 2 H(+). Its function is as follows. Allows the formation of correctly charged Asn-tRNA(Asn) or Gln-tRNA(Gln) through the transamidation of misacylated Asp-tRNA(Asn) or Glu-tRNA(Gln) in organisms which lack either or both of asparaginyl-tRNA or glutaminyl-tRNA synthetases. The reaction takes place in the presence of glutamine and ATP through an activated phospho-Asp-tRNA(Asn) or phospho-Glu-tRNA(Gln). The sequence is that of Aspartyl/glutamyl-tRNA(Asn/Gln) amidotransferase subunit B from Methanosarcina acetivorans (strain ATCC 35395 / DSM 2834 / JCM 12185 / C2A).